Reading from the N-terminus, the 126-residue chain is Protein chibby homolog 1 (126 aa).

The span at 1–10 shows a compositional bias: polar residues; sequence MPFFGNTFSP. A disordered region spans residues 1 to 26; the sequence is MPFFGNTFSPKKTPPRKSASLSNLHS. Ser9 and Ser20 each carry phosphoserine. Positions 60–112 are minimal region for the interaction with PKD2; it reads IAETGVSGGVDRREVQRLRRRNQQLEEENNLLRLKVDILLDMLSESTAESHLM. A coiled-coil region spans residues 67–125; the sequence is GGVDRREVQRLRRRNQQLEEENNLLRLKVDILLDMLSESTAESHLMEKELDELRISRKR. The leucine-zipper; mediates homodimerization stretch occupies residues 77-98; that stretch reads LRRRNQQLEEENNLLRLKVDIL.

It belongs to the chibby family. Homodimer. Homodimerization is essential for nuclear localization and interaction with KPNA4 but is dispensable for interaction with CTNNB1. Interacts with polycystin-2/PKD2 and GM130. Interacts with the C-terminal region of CTNNB1. Interacts (C-terminus) with TCIM (C-terminus), TCIM competes with CTNNB1 for the interaction with CBY1. Interacts with FAM92A; this interaction facilitates targeting of FAM92A to cilium basal body. Interacts with CIBAR2. Interacts with KPNA4. Widely expressed. Expressed at higher levels in heart, skeletal muscle, kidney and placenta. Also found in brain, lung, liver and testis. Significantly down-regulated in thyroid and metastatic uterine tumors.

It is found in the nucleus speckle. The protein resides in the cytoplasm. Its subcellular location is the cytoskeleton. It localises to the cilium basal body. The protein localises to the microtubule organizing center. It is found in the centrosome. The protein resides in the centriole. Its subcellular location is the golgi apparatus. It localises to the trans-Golgi network. The protein localises to the cell projection. It is found in the cilium. The protein resides in the flagellum. Its subcellular location is the nucleus. Its function is as follows. Inhibits the Wnt/Wingless pathway by binding to CTNNB1/beta-catenin and inhibiting beta-catenin-mediated transcriptional activation through competition with TCF/LEF transcription factors. Has also been shown to play a role in regulating the intracellular trafficking of polycystin-2/PKD2 and possibly of other intracellular proteins. Promotes adipocyte and cardiomyocyte differentiation. This chain is Protein chibby homolog 1 (CBY1), found in Homo sapiens (Human).